The primary structure comprises 315 residues: MKLDLFKWEKPAWIVSSLLVLISIFAMAISWAQFQAPFRPGLDFVGGTRLQLQLECASSNNCPAAIDVAEVQDILGGVGLGNSSVQVIEDYTLSIRQQTLDVEQREAVQKALNEGIGKFDPETIQIDTVGPTVGKALFRSGVLALVISLLGIIIYLTIRFQLDYAVFAIIALLYDALITMGAFAIFGLVGGVEVDSLFLVALLTIIGFSVNDTVVIYDRVRETLERHSDWDINHVVDDAVNQTLTRSINTSLTTSLPLVAIFLFGGDSLKFFALALIIGFASGVYSSIFMATTLWAWWRKWRSPKNPPREMVAEV.

Transmembrane regions (helical) follow at residues 12 to 32 (AWIV…ISWA), 136 to 156 (ALFR…IIYL), 166 to 186 (VFAI…FAIF), 188 to 208 (LVGG…IIGF), 247 to 267 (SINT…FGGD), and 271 to 291 (FFAL…IFMA).

The protein belongs to the SecD/SecF family. SecF subfamily. Forms a complex with SecD. Part of the essential Sec protein translocation apparatus which comprises SecA, SecYEG and auxiliary proteins SecDF. Other proteins may also be involved.

It is found in the cell inner membrane. Part of the Sec protein translocase complex. Interacts with the SecYEG preprotein conducting channel. SecDF uses the proton motive force (PMF) to complete protein translocation after the ATP-dependent function of SecA. Functionally, probably participates in protein translocation into and across both the cytoplasmic and thylakoid membranes in cyanobacterial cells. This is Protein translocase subunit SecF from Synechocystis sp. (strain ATCC 27184 / PCC 6803 / Kazusa).